A 500-amino-acid chain; its full sequence is Cytochrome P450 2D4 (500 aa).

A heme-binding site is contributed by cysteine 446.

Belongs to the cytochrome P450 family. Heme is required as a cofactor. In terms of tissue distribution, brain.

The protein resides in the endoplasmic reticulum membrane. The protein localises to the microsome membrane. The enzyme catalyses an organic molecule + reduced [NADPH--hemoprotein reductase] + O2 = an alcohol + oxidized [NADPH--hemoprotein reductase] + H2O + H(+). Cytochromes P450 are a group of heme-thiolate monooxygenases. In liver microsomes, this enzyme is involved in an NADPH-dependent electron transport pathway. It oxidizes a variety of structurally unrelated compounds, including steroids, fatty acids, and xenobiotics. This Rattus norvegicus (Rat) protein is Cytochrome P450 2D4 (Cyp2d4).